A 385-amino-acid chain; its full sequence is Transcription factor TGAL3 (385 aa).

The disordered stretch occupies residues leucine 62–arginine 113. The span at serine 87–methionine 96 shows a compositional bias: basic and acidic residues. The 45-residue stretch at aspartate 93–arginine 137 folds into the bZIP domain. The basic motif stretch occupies residues lysine 95–lysine 115. A leucine-zipper region spans residues leucine 121 to leucine 135. Residues threonine 162 to arginine 382 enclose the DOG1 domain.

Belongs to the bZIP family. As to quaternary structure, interacts with NPR1/NH1, NPR2/NH2 and NPR3/NH3.

The protein localises to the nucleus. Transcriptional regulator involved in defense response. In Oryza sativa subsp. japonica (Rice), this protein is Transcription factor TGAL3.